The primary structure comprises 303 residues: MDDLFLVNEINRLKIERDACILAHNYQLPEVQDIADIVGDSLALSRAAAETTNKVIVFCGVKFMAESAKILSPDKTVLIPSKYAGCPLADSITKEQLEMEKKKHPEAEVICYVNSSAEVKAVSDVSCTSSNAVKVVQNSKSNKILFVPDENLAGYVAEQIPDKEIIPWAGHCITHARITVDDVIKAQEEHPEAEMLVHPEVSEEIRENADFVGSTSAIINYAKNSDSKEFIIGTEIGVLHKMKKDSPEKQFYLLSPRLVCENMKMTRLVDVYNSLMNMQYEVFVPENVRIKALGSLEKMISIE.

The iminosuccinate site is built by His-24 and Ser-41. Residue Cys-86 coordinates [4Fe-4S] cluster. Iminosuccinate is bound by residues 112–114 (YVN) and Ser-129. Cys-172 is a binding site for [4Fe-4S] cluster. Iminosuccinate contacts are provided by residues 198-200 (HPE) and Thr-215. Cys-260 contacts [4Fe-4S] cluster.

This sequence belongs to the quinolinate synthase family. Type 2 subfamily. [4Fe-4S] cluster is required as a cofactor.

It is found in the cytoplasm. It carries out the reaction iminosuccinate + dihydroxyacetone phosphate = quinolinate + phosphate + 2 H2O + H(+). It participates in cofactor biosynthesis; NAD(+) biosynthesis; quinolinate from iminoaspartate: step 1/1. In terms of biological role, catalyzes the condensation of iminoaspartate with dihydroxyacetone phosphate to form quinolinate. The polypeptide is Quinolinate synthase (Clostridium kluyveri (strain NBRC 12016)).